The sequence spans 658 residues: Probable transketolase (658 aa).

His-24 is a substrate binding site. Thiamine diphosphate-binding positions include His-64 and 113 to 115 (GPL). Asp-154 contacts Mg(2+). Thiamine diphosphate-binding residues include Gly-155 and Asn-184. Asn-184 and Ile-186 together coordinate Mg(2+). Positions 259, 354, and 381 each coordinate substrate. His-259 is a binding site for thiamine diphosphate. The Proton donor role is filled by Glu-408. Residue Phe-434 coordinates thiamine diphosphate. His-458, Asp-466, and Arg-517 together coordinate substrate.

Belongs to the transketolase family. Homodimer. Requires Mg(2+) as cofactor. Ca(2+) serves as cofactor. Mn(2+) is required as a cofactor. It depends on Co(2+) as a cofactor. The cofactor is thiamine diphosphate.

It carries out the reaction D-sedoheptulose 7-phosphate + D-glyceraldehyde 3-phosphate = aldehydo-D-ribose 5-phosphate + D-xylulose 5-phosphate. Its function is as follows. Necessary for high-efficiency recombination chromosomal DNA during genetic transformation. Functionally, catalyzes the transfer of a two-carbon ketol group from a ketose donor to an aldose acceptor, via a covalent intermediate with the cofactor thiamine pyrophosphate. The protein is Probable transketolase (tkt) of Streptococcus pneumoniae serotype 4 (strain ATCC BAA-334 / TIGR4).